The following is a 367-amino-acid chain: uncharacterized protein (367 aa).

Belongs to the mimivirus L17x/L18x family.

This is an uncharacterized protein from Acanthamoeba polyphaga (Amoeba).